Consider the following 414-residue polypeptide: Secernin-1 (414 aa).

Ala-2 is modified (N-acetylalanine). Cys-9 is an active-site residue.

This sequence belongs to the peptidase C69 family. Secernin subfamily.

The protein localises to the cytoplasm. In terms of biological role, regulates exocytosis in mast cells. Increases both the extent of secretion and the sensitivity of mast cells to stimulation with calcium. This Homo sapiens (Human) protein is Secernin-1 (SCRN1).